We begin with the raw amino-acid sequence, 193 residues long: Ion-translocating oxidoreductase complex subunit A (193 aa).

Transmembrane regions (helical) follow at residues 5-25 (LLLFVGTVLVNNFVLVKFLGL), 47-67 (FVMTLASICAWLIDTWILIPL), 72-92 (LRTLAFILVIAVVVQFTEMVV), 102-122 (LLGIFLPLITTNCAVLGVALL), 134-154 (ALYGFSAAVGFSLVMVLFAAI), and 171-191 (AIALITAGLMSLAFMGFSGLV).

Belongs to the NqrDE/RnfAE family. The complex is composed of six subunits: RnfA, RnfB, RnfC, RnfD, RnfE and RnfG.

Its subcellular location is the cell inner membrane. Its function is as follows. Part of a membrane-bound complex that couples electron transfer with translocation of ions across the membrane. This Citrobacter koseri (strain ATCC BAA-895 / CDC 4225-83 / SGSC4696) protein is Ion-translocating oxidoreductase complex subunit A.